Consider the following 37-residue polypeptide: Cytochrome b6-f complex subunit 5 (37 aa).

The chain crosses the membrane as a helical span at residues 5-25 (LLSGIVLGLIPITLAGLFVTA).

This sequence belongs to the PetG family. The 4 large subunits of the cytochrome b6-f complex are cytochrome b6, subunit IV (17 kDa polypeptide, PetD), cytochrome f and the Rieske protein, while the 4 small subunits are PetG, PetL, PetM and PetN. The complex functions as a dimer.

The protein localises to the plastid. It is found in the chloroplast thylakoid membrane. Functionally, component of the cytochrome b6-f complex, which mediates electron transfer between photosystem II (PSII) and photosystem I (PSI), cyclic electron flow around PSI, and state transitions. PetG is required for either the stability or assembly of the cytochrome b6-f complex. This is Cytochrome b6-f complex subunit 5 from Cryptomeria japonica (Japanese cedar).